The chain runs to 205 residues: ATP synthase subunit b (205 aa).

The chain crosses the membrane as a helical span at residues 51–69 (FAWRCLDFAVLLAIVVWAL).

It belongs to the ATPase B chain family. As to quaternary structure, F-type ATPases have 2 components, F(1) - the catalytic core - and F(0) - the membrane proton channel. F(1) has five subunits: alpha(3), beta(3), gamma(1), delta(1), epsilon(1). F(0) has three main subunits: a(1), b(2) and c(10-14). The alpha and beta chains form an alternating ring which encloses part of the gamma chain. F(1) is attached to F(0) by a central stalk formed by the gamma and epsilon chains, while a peripheral stalk is formed by the delta and b chains.

It is found in the cell inner membrane. Functionally, f(1)F(0) ATP synthase produces ATP from ADP in the presence of a proton or sodium gradient. F-type ATPases consist of two structural domains, F(1) containing the extramembraneous catalytic core and F(0) containing the membrane proton channel, linked together by a central stalk and a peripheral stalk. During catalysis, ATP synthesis in the catalytic domain of F(1) is coupled via a rotary mechanism of the central stalk subunits to proton translocation. In terms of biological role, component of the F(0) channel, it forms part of the peripheral stalk, linking F(1) to F(0). This Geotalea uraniireducens (strain Rf4) (Geobacter uraniireducens) protein is ATP synthase subunit b.